The following is a 144-amino-acid chain: Large ribosomal subunit protein uL16 (144 aa).

Belongs to the universal ribosomal protein uL16 family. Part of the 50S ribosomal subunit.

Functionally, binds 23S rRNA and is also seen to make contacts with the A and possibly P site tRNAs. The polypeptide is Large ribosomal subunit protein uL16 (Lacticaseibacillus paracasei (strain ATCC 334 / BCRC 17002 / CCUG 31169 / CIP 107868 / KCTC 3260 / NRRL B-441) (Lactobacillus paracasei)).